The sequence spans 319 residues: MNLMRTAMLLAFMTVLFMAVGYVIGGRGGMMIALVIAAGMNFFSYWNSDRMVLRMYRAQEVDERSAPEYYGIVRDLAKNAGLPMPRVYVIDSPQPNAFATGRNPENAAVAASTGLLHSLSYEEVAGVMAHELAHIQYRDTLTMTMTATLAGAISMLGNFAFFFGGNRENNNPLGFIGVLIAMIVAPLAAALVQMAISRTREYSADRRGAEICGNPLWLSSALRKIAGAAHVVHNPDAERNPATAHMFIINPLSGERMDNLFSTHPNTENRVVALERMAREMSTGSTAPVRPDNAVRKSRSVPRTGWGRGGSEPPKGPWS.

A run of 2 helical transmembrane segments spans residues 6–26 (TAML…VIGG) and 28–48 (GGMM…YWNS). His-130 contacts Zn(2+). Residue Glu-131 is part of the active site. Zn(2+) is bound at residue His-134. The next 2 helical transmembrane spans lie at 145-165 (MTAT…FFGG) and 172-192 (PLGF…AALV). Position 201 (Glu-201) interacts with Zn(2+). Positions 280–319 (EMSTGSTAPVRPDNAVRKSRSVPRTGWGRGGSEPPKGPWS) are disordered.

It belongs to the peptidase M48B family. The cofactor is Zn(2+).

The protein resides in the cell inner membrane. The protein is Protease HtpX homolog of Sinorhizobium medicae (strain WSM419) (Ensifer medicae).